The sequence spans 822 residues: Dimethyl sulfoxide/trimethylamine N-oxide reductase (822 aa).

A signal peptide (tat-type signal) is located at residues 1 to 42 (MTKLSGQELHAELSRRAFLSYTAAVGALGLCGTSLLAQGARA). Mo-bis(molybdopterin guanine dinucleotide) contacts are provided by residues Trp-158, 158–160 (WKS), Ser-189, 232–233 (KT), 262–263 (IN), 283–285 (QTD), 364–365 (WS), Arg-368, Asn-476, His-480, 500–501 (QD), Arg-523, Asp-553, 683–686 (ASHP), Arg-689, 691–693 (HSQ), Asn-779, and 796–797 (GQ).

Belongs to the prokaryotic molybdopterin-containing oxidoreductase family. Homodimer. The cofactor is Mo-bis(molybdopterin guanine dinucleotide). In terms of processing, predicted to be exported by the Tat system. The position of the signal peptide cleavage has been experimentally proven.

It localises to the periplasm. The catalysed reaction is dimethyl sulfide + a menaquinone + H2O = dimethyl sulfoxide + a menaquinol. The enzyme catalyses trimethylamine + 2 Fe(III)-[cytochrome c] + H2O = trimethylamine N-oxide + 2 Fe(II)-[cytochrome c] + 3 H(+). Catalyzes the reduction of dimethyl sulfoxide (DMSO) and trimethylamine N-oxide (TMAO) to dimethyl sulfide (DMS) and trimethylamine, respectively. The terminal DMSO reductase can also use various sulfoxides and N-oxide compounds as terminal electron acceptor in addition to DMSO and TMAO. This chain is Dimethyl sulfoxide/trimethylamine N-oxide reductase (dmsA), found in Cereibacter sphaeroides (Rhodobacter sphaeroides).